Reading from the N-terminus, the 236-residue chain is Terpene cyclase andB (236 aa).

7 helical membrane-spanning segments follow: residues 13–33 (TVVN…YILM), 45–65 (MSML…ILCP), 70–90 (VVRP…YAAI), 106–126 (HLPL…IALI), 135–155 (FLWS…FQLL), 166–186 (VLWL…TLMW), and 200–220 (LTAY…VVFY).

The protein belongs to the paxB family.

It localises to the membrane. It functions in the pathway secondary metabolite biosynthesis; terpenoid biosynthesis. Functionally, terpene cyclase; part of the gene cluster that mediates the biosynthesis of anditomin, a fungal meroterpenoid. The first step of the pathway is the synthesis of 3,5-dimethylorsellinic acid (DMOA) by the polyketide synthase andM. DMOA is then converted to the phthalide compound 5,7-dihydroxy-4,6-dimethylphthalide (DHDMP) by the cytochrome P450 monooxygenase andK, which is further prenylated by the prenyltransferase andD to yield farnesyl-DHDMP. Further epoxidation by the FAD-dependent monooxygenase andE leads to epoxyfarnesyl-DHDMP. The next step involves the terpene cyclase andB that converts epoxyfarnesyl-DHDMP into preandiloid A through opening of the epoxide ring followed by the cyclization of the farnesyl moiety. Preandiloid A is in turn oxidized at the C-3 hydroxyl group to yield preandiloid B by the dehydrogenase andC. The dioxygenase andA is solely responsible for the dehydrogenation of preandiloid B leading to the enone preandiloid C, as well as for the intriguing structural rearrangement to generate the bicyclo[2.2.2]octane core, transforming preandiloid C into andiconin. FAD-binding monooxygenase andJ then produces andilesin D which is reduced by dehydrogenase andI to yield andilesin A. Action of acetyltransferase andG followed by a spontaneous acetate elimination leads then to andilesin B, which is in turn substrate of the short chain dehydrogenase andH to yield andilesin C. Finally, the dioxygenase andF catalyzes the transformation of andilesin C to anditomin. The sequence is that of Terpene cyclase andB from Emericella variicolor (Aspergillus stellatus).